The following is a 187-amino-acid chain: Rusticyanin (187 aa).

An N-terminal signal peptide occupies residues 1-32 (MYTQNTMKKNWYVTVGAAAALAATVGMGTAMA). Residues 85-187 (SFEVHDKKNP…TGMFGKIVVK (103 aa)) form the Plastocyanin-like domain. Residues H117, C170, H175, and M180 each coordinate Cu cation.

As to quaternary structure, monomer. Cu cation serves as cofactor.

Its subcellular location is the periplasm. Electron carrier from cytochrome c552 to the A-type oxidase. The polypeptide is Rusticyanin (rus) (Acidithiobacillus ferrooxidans (strain ATCC 23270 / DSM 14882 / CIP 104768 / NCIMB 8455) (Ferrobacillus ferrooxidans (strain ATCC 23270))).